Here is a 462-residue protein sequence, read N- to C-terminus: tRNA modification GTPase MnmE (462 aa).

Arginine 27, glutamate 89, and arginine 128 together coordinate (6S)-5-formyl-5,6,7,8-tetrahydrofolate. In terms of domain architecture, TrmE-type G spans 224–383 (GLATAIVGRP…LEAQIAKLFF (160 aa)). A K(+)-binding site is contributed by asparagine 234. Residues 234–239 (NVGKSS), 253–259 (TDVAGTT), and 278–281 (DTAG) each bind GTP. Residue serine 238 participates in Mg(2+) binding. The K(+) site is built by threonine 253, valine 255, and threonine 258. Threonine 259 serves as a coordination point for Mg(2+). Lysine 462 is a binding site for (6S)-5-formyl-5,6,7,8-tetrahydrofolate.

The protein belongs to the TRAFAC class TrmE-Era-EngA-EngB-Septin-like GTPase superfamily. TrmE GTPase family. In terms of assembly, homodimer. Heterotetramer of two MnmE and two MnmG subunits. Requires K(+) as cofactor.

Its subcellular location is the cytoplasm. Its function is as follows. Exhibits a very high intrinsic GTPase hydrolysis rate. Involved in the addition of a carboxymethylaminomethyl (cmnm) group at the wobble position (U34) of certain tRNAs, forming tRNA-cmnm(5)s(2)U34. This Latilactobacillus sakei subsp. sakei (strain 23K) (Lactobacillus sakei subsp. sakei) protein is tRNA modification GTPase MnmE.